We begin with the raw amino-acid sequence, 933 residues long: Protein translocase subunit SecA (933 aa).

ATP contacts are provided by residues Q87, 105–109 (GEGKT), and D515. 4 residues coordinate Zn(2+): C917, C919, C928, and H929.

Belongs to the SecA family. As to quaternary structure, monomer and homodimer. Part of the essential Sec protein translocation apparatus which comprises SecA, SecYEG and auxiliary proteins SecDF-YajC and YidC. Zn(2+) is required as a cofactor.

The protein resides in the cell inner membrane. Its subcellular location is the cytoplasm. The catalysed reaction is ATP + H2O + cellular proteinSide 1 = ADP + phosphate + cellular proteinSide 2.. Functionally, part of the Sec protein translocase complex. Interacts with the SecYEG preprotein conducting channel. Has a central role in coupling the hydrolysis of ATP to the transfer of proteins into and across the cell membrane, serving both as a receptor for the preprotein-SecB complex and as an ATP-driven molecular motor driving the stepwise translocation of polypeptide chains across the membrane. The polypeptide is Protein translocase subunit SecA (Burkholderia cenocepacia (strain ATCC BAA-245 / DSM 16553 / LMG 16656 / NCTC 13227 / J2315 / CF5610) (Burkholderia cepacia (strain J2315))).